Reading from the N-terminus, the 374-residue chain is Putative G-protein coupled receptor-like protein B0244.6 (374 aa).

Topologically, residues 1 to 54 (MTQNHYTTSIFANCSKHYEFEILLETCTNSTNPCHAVSQIQSAITIAYVDYYTS) are extracellular. A helical membrane pass occupies residues 55-75 (VALFSIAALLDIYCLIITIPL). At 76-86 (YRRMKDDSKKK) the chain is on the cytoplasmic side. A helical membrane pass occupies residues 87-107 (YVFLITRCISGLLLVVAWLLI). Residues 108 to 137 (QCIYLRFIAPSQDNLPYYVLALALNIGSTY) lie on the Extracellular side of the membrane. Residues 138 to 158 (VLLGSYVGMAGILYLGVLNPI) traverse the membrane as a helical segment. Over 159–169 (AFNQHLTLRIV) the chain is Cytoplasmic. A helical membrane pass occupies residues 170-190 (YIAVCIIFVISIFISIPLAIF). Residues 191-216 (QALMTVPTSSMSCTDTACAPLITLIN) are Extracellular-facing. The chain crosses the membrane as a helical span at residues 217–237 (FVLVFGSLITTTLTLTFVLIS). Residues 238–262 (LCRHRKEFKKLDTTSNTSLNSAVRL) lie on the Cytoplasmic side of the membrane. A helical membrane pass occupies residues 263 to 283 (LKFTLFAVLLLVAAEVIPFVI). Residues 284 to 304 (SETKKKHSVVTGCYYFYHSGK) lie on the Extracellular side of the membrane. Residues 305 to 325 (VIQYAVFALTESSIWSIALII) form a helical membrane-spanning segment. Residues 326–374 (DPLINIIFDRTVSKKATDQVKWMRKSCVGLVRKVTKRSNPENFTETSEI) are Cytoplasmic-facing.

The protein belongs to the G-protein coupled receptor 1 family. B0244 subfamily.

Its subcellular location is the cell membrane. This chain is Putative G-protein coupled receptor-like protein B0244.6, found in Caenorhabditis elegans.